The following is a 1177-amino-acid chain: MEGCILADSRQSKTAASPSPSRPQSSSNNSVPGAPNRVSFAKLREPLEVPGLLDVQTDSFEWLIGSPRWRESAAERGDVNPVGGLEEVLYELSPIEDFSGSMSLSFSDPRFDDVKAPVDECKDKDMTYAAPLFVTAEFINNNTGEIKSQTVFMGDFPMMTEKGTFIINGTERVVVSQLVRSPGVYFDETIDKSTDKTLHSVKVIPSRGAWLEFDVDKRDTVGVRIDRKRRQPVTVLLKALGWTSEQIVERFGFSEIMRSTLEKDNTVGTDEALLDIYRKLRPGEPPTKESAQTLLENLFFKEKRYDLARVGRYKVNKKLGLHVGEPITSSTLTEEDVVATIEYLVRLHEGQTTMTVPGGVEVPVETDDIDHFGNRRLRTVGELIQNQIRVGMSRMERVVRERMTTQDVEAITPQTLINIRPVVAAIKEFFGTSQLSQFMDQNNPLSGLTHKRRLSALGPGGLSRERAGLEVRDVHPSHYGRMCPIETPEGPNIGLIGSLSVYARVNPFGFIETPYRKVVDGVVSDEIVYLTADEEDRHVVAQANSPIDADGRFVEPRVLVRRKAGEVEYVPSSEVDYMDVSPRQMVSVATAMIPFLEHDDANRALMGANMQRQAVPLVRSEAPLVGTGMELRAAIDAGDVVVAEESGVIEEVSADYITVMHDNGTRRTYRMRKFARSNHGTCANQCPIVDAGDRVEAGQVIADGPCTDDGEMALGKNLLVAIMPWEGHNYEDAIILSNRLVEEDVLTSIHIEEHEIDARDTKLGAEEITRDIPNISDEVLADLDERGIVRIGAEVRDGDILVGKVTPKGETELTPEERLLRAIFGEKAREVRDTSLKVPHGESGKVIGIRVFSREDEDELPAGVNELVRVYVAQKRKISDGDKLAGRHGNKGVIGKILPVEDMPFLADGTPVDIILNTHGVPRRMNIGQILETHLGWCAHSGWKVDAAKGVPDWAARLPDELLEAQPNAIVSTPVFDGAQEAELQGLLSCTLPNRDGDVLVDADGKAMLFDGRSGEPFPYPVTVGYMYIMKLHHLVDDKIHARSTGPYSMITQQPLGGKAQFGGQRFGEMECWAMQAYGAAYTLQELLTIKSDDTVGRVKVYEAIVKGENIPEPGIPESFKVLLKELQSLCLNVEVLSSDGAAIELREGEDEDLERAAANLGINLSRNESASVEDLA.

Residues 1–36 (MEGCILADSRQSKTAASPSPSRPQSSSNNSVPGAPN) form a disordered region. Low complexity predominate over residues 17–32 (SPSPSRPQSSSNNSVP).

This sequence belongs to the RNA polymerase beta chain family. As to quaternary structure, the RNAP catalytic core consists of 2 alpha, 1 beta, 1 beta' and 1 omega subunit. When a sigma factor is associated with the core the holoenzyme is formed, which can initiate transcription.

It catalyses the reaction RNA(n) + a ribonucleoside 5'-triphosphate = RNA(n+1) + diphosphate. DNA-dependent RNA polymerase catalyzes the transcription of DNA into RNA using the four ribonucleoside triphosphates as substrates. The sequence is that of DNA-directed RNA polymerase subunit beta from Mycobacterium tuberculosis (strain ATCC 25177 / H37Ra).